The chain runs to 187 residues: Thioredoxin F, chloroplastic (187 aa).

A chloroplast-targeting transit peptide spans 1 to 72 (MALRLSVSSS…GSDTATVGAE (72 aa)). In terms of domain architecture, Thioredoxin spans 73–186 (AEAVAVTGQV…LIQAIETVKS (114 aa)). Residues cysteine 111 and cysteine 114 each act as nucleophile in the active site. An intrachain disulfide couples cysteine 111 to cysteine 114.

This sequence belongs to the thioredoxin family. Plant F-type subfamily.

The protein resides in the plastid. It is found in the chloroplast. Thiol-disulfide oxidoreductase involved in the redox regulation of enzymes of both reductive pentose phosphate pathway (Calvin-Benson cycle) and oxidative pentose phosphate pathway. The protein is Thioredoxin F, chloroplastic of Oryza sativa subsp. japonica (Rice).